A 222-amino-acid polypeptide reads, in one-letter code: Twisted gastrulation protein homolog 1 (222 aa).

Positions 1-24 (MKSHYIVLALASLTFLLCLPVSQS) are cleaved as a signal peptide. N80 and N146 each carry an N-linked (GlcNAc...) asparagine glycan.

This sequence belongs to the twisted gastrulation protein family. As to quaternary structure, interacts with CHRD and/or BMP4. This interaction enhances CHRD/BMP4 complex formation. Interacts with BMP7. Expressed in lymph node, liver, kidney, and lung. Expression in the kidney was stronger in the medulla than in the cortex, particularly in the cells surrounding the medullary tubules. Expressed in growth plate cartilage of long bones, ribs, and digits and to a lesser extent also in the resting zone of the epiphysis, trabecular bone, and vertebral cartilage. Expression seems to be absent from other skeletal tissues including muscle, skin, and fibroblasts.

It localises to the secreted. In terms of biological role, may be involved in dorsoventral axis formation. Seems to antagonize BMP signaling by forming ternary complexes with CHRD and BMPs, thereby preventing BMPs from binding to their receptors. In addition to the anti-BMP function, also has pro-BMP activity, partly mediated by cleavage and degradation of CHRD, which releases BMPs from ternary complexes. May be an important modulator of BMP-regulated cartilage development and chondrocyte differentiation. May play a role in thymocyte development. The chain is Twisted gastrulation protein homolog 1 (Twsg1) from Mus musculus (Mouse).